A 166-amino-acid polypeptide reads, in one-letter code: Ureidoglycolate lyase (166 aa).

Belongs to the ureidoglycolate lyase family. Homodimer. Ni(2+) serves as cofactor.

The enzyme catalyses (S)-ureidoglycolate = urea + glyoxylate. It participates in nitrogen metabolism; (S)-allantoin degradation. Catalyzes the catabolism of the allantoin degradation intermediate (S)-ureidoglycolate, generating urea and glyoxylate. Involved in the utilization of allantoin as nitrogen source. The protein is Ureidoglycolate lyase of Rhizobium etli (strain ATCC 51251 / DSM 11541 / JCM 21823 / NBRC 15573 / CFN 42).